The chain runs to 494 residues: Alpha-amylase-related protein (494 aa).

The signal sequence occupies residues 1-20; the sequence is MFKFALALTLCLAGASLSLA. Q21 carries the post-translational modification Pyrrolidone carboxylic acid. C48 and C104 are oxidised to a cystine. 3 residues coordinate Ca(2+): N118, Q169, and D178. Cysteines 157 and 171 form a disulfide. Residue R206 participates in chloride binding. D208 acts as the Nucleophile in catalysis. H212 provides a ligand contact to Ca(2+). E245 (proton donor) is an active-site residue. Chloride contacts are provided by N308 and R343. Disulfide bonds link C376/C382, C418/C441, and C448/C460.

It belongs to the glycosyl hydrolase 13 family. Monomer. Ca(2+) is required as a cofactor. The cofactor is chloride.

It localises to the secreted. The catalysed reaction is Endohydrolysis of (1-&gt;4)-alpha-D-glucosidic linkages in polysaccharides containing three or more (1-&gt;4)-alpha-linked D-glucose units.. This is Alpha-amylase-related protein (Amyrel) from Drosophila dossoui (Fruit fly).